Reading from the N-terminus, the 170-residue chain is Sec-independent protein translocase protein TATA, chloroplastic (170 aa).

A chloroplast-targeting transit peptide spans 1–61 (MGIPVVVPVA…GGSGGDLAAV (61 aa)). The Lumenal portion of the chain corresponds to 62–84 (AASVAARPRRAGSGGGGALGCKC). A helical membrane pass occupies residues 85 to 105 (LFGLGVPELAVIAGVAALVFG). Topologically, residues 106–170 (PKQLPEIGRS…LEASSSKESA (65 aa)) are stromal. The span at 130 to 139 (FETELKKEPG) shows a compositional bias: basic and acidic residues. Residues 130–170 (FETELKKEPGEGGDQPPPATPTAVSGGEEKGLEASSSKESA) form a disordered region.

This sequence belongs to the TatA/E family. As to quaternary structure, in thylakoid membranes, TATC and TATB form a large receptor complex, containing about eight TATC-TATB pairs, which binds the precursor protein. Twin arginine signal peptide promotes pH-triggered docking of TATA oligomers to TATC-TATB receptor complex, inducing a conformational switch of TATA that results in activation of the translocase. TATA dissociates from TATC-TATB upon completion of translocation.

The protein localises to the plastid. Its subcellular location is the chloroplast thylakoid membrane. Functionally, part of the twin-arginine translocation (Tat) system that transports large folded proteins containing a characteristic twin-arginine motif in their signal peptide across the thylakoid membrane. Involved in delta pH-dependent protein transport required for chloroplast development, especially thylakoid membrane formation. TATC and TATB mediate precursor recognition, whereas TATA facilitates translocation. The protein is Sec-independent protein translocase protein TATA, chloroplastic of Zea mays (Maize).